The sequence spans 72 residues: Mitotic-spindle organizing protein 1 (72 aa).

It belongs to the MOZART1 family. In terms of assembly, part of the gamma-tubulin complex.

It localises to the cytoplasm. Its subcellular location is the cytoskeleton. It is found in the microtubule organizing center. The protein localises to the spindle pole body. Functionally, required for gamma-tubulin complex recruitment to the microtubule organizing center (MTOC). The sequence is that of Mitotic-spindle organizing protein 1 from Coccidioides immitis (strain RS) (Valley fever fungus).